A 225-amino-acid polypeptide reads, in one-letter code: MKIVVPVMPRSLEEAQEIDLSKFDSVDIIEWRADALPKDDIINVAPAIFEKFAGHEIIFTLRTTREGGNIVLSDAEYVELIQKINSIYNPDYIDFEYFSHKEVFQEMLEFPNLVLSYHNFQETPENIMEIFSELTALAPRVVKIAVMPKNEQDVLDVMNYTRGFKTINPDQVYATVSMSKIGRISRFAGDVTGSSWTFAYLDSSIAPGQITISEMKRVKALLDAD.

3-dehydroquinate-binding positions include 30-32 (EWR) and Arg62. Residue His118 is the Proton donor/acceptor of the active site. Lys143 (schiff-base intermediate with substrate) is an active-site residue. 2 residues coordinate 3-dehydroquinate: Arg186 and Gln209.

The protein belongs to the type-I 3-dehydroquinase family. Homodimer.

It carries out the reaction 3-dehydroquinate = 3-dehydroshikimate + H2O. Its pathway is metabolic intermediate biosynthesis; chorismate biosynthesis; chorismate from D-erythrose 4-phosphate and phosphoenolpyruvate: step 3/7. Functionally, involved in the third step of the chorismate pathway, which leads to the biosynthesis of aromatic amino acids. Catalyzes the cis-dehydration of 3-dehydroquinate (DHQ) and introduces the first double bond of the aromatic ring to yield 3-dehydroshikimate. The protein is 3-dehydroquinate dehydratase of Streptococcus agalactiae serotype Ia (strain ATCC 27591 / A909 / CDC SS700).